The chain runs to 87 residues: Small ribosomal subunit protein eS21 (87 aa).

It belongs to the eukaryotic ribosomal protein eS21 family. Component of the small ribosomal subunit. Mature ribosomes consist of a small (40S) and a large (60S) subunit. The 40S subunit contains about 33 different proteins and 1 molecule of RNA (18S). The 60S subunit contains about 49 different proteins and 3 molecules of RNA (25S, 5.8S and 5S).

It is found in the cytoplasm. In terms of biological role, required for the processing of the 20S rRNA-precursor to mature 18S rRNA in a late step of the maturation of 40S ribosomal subunits. Has a physiological role leading to 18S rRNA stability. The protein is Small ribosomal subunit protein eS21 (RPS21) of Candida albicans (Yeast).